We begin with the raw amino-acid sequence, 215 residues long: Pyrrolidone-carboxylate peptidase (215 aa).

Catalysis depends on residues glutamate 80, cysteine 143, and histidine 167.

It belongs to the peptidase C15 family. In terms of assembly, homotetramer.

The protein resides in the cytoplasm. It carries out the reaction Release of an N-terminal pyroglutamyl group from a polypeptide, the second amino acid generally not being Pro.. Functionally, removes 5-oxoproline from various penultimate amino acid residues except L-proline. The sequence is that of Pyrrolidone-carboxylate peptidase from Yersinia pseudotuberculosis serotype O:3 (strain YPIII).